We begin with the raw amino-acid sequence, 607 residues long: Matrix metalloproteinase-16 (607 aa).

The first 31 residues, methionine 1–cysteine 31, serve as a signal peptide directing secretion. The propeptide occupies alanine 32–arginine 119. An N-linked (GlcNAc...) asparagine glycan is attached at asparagine 83. Positions proline 99–glutamine 106 match the Cysteine switch motif. Cysteine 101 contributes to the Zn(2+) binding site. The Extracellular portion of the chain corresponds to tyrosine 120–alanine 564. Residue aspartate 183 participates in Ca(2+) binding. Residues histidine 193 and aspartate 195 each coordinate Zn(2+). Ca(2+)-binding residues include aspartate 200, glycine 201, glycine 203, and phenylalanine 205. Histidine 208 is a Zn(2+) binding site. Residues glycine 215, glycine 217, and aspartate 219 each contribute to the Ca(2+) site. A Zn(2+)-binding site is contributed by histidine 221. Ca(2+) is bound by residues aspartate 223 and glutamate 226. Histidine 246 contributes to the Zn(2+) binding site. The active site involves glutamate 247. 2 residues coordinate Zn(2+): histidine 250 and histidine 256. The interval aspartate 281–proline 340 is disordered. Positions aspartate 294–alanine 315 are enriched in pro residues. Hemopexin repeat units lie at residues proline 340–leucine 388, proline 389–isoleucine 434, proline 436–proline 484, and glutamate 485–cysteine 532. Cysteine 343 and cysteine 532 are disulfide-bonded. Residues isoleucine 565–phenylalanine 585 traverse the membrane as a helical segment. The Cytoplasmic segment spans residues glutamine 586–valine 607.

Belongs to the peptidase M10A family. As to quaternary structure, interacts with CSPG4 through CSPG4 chondroitin sulfate glycosaminoglycan. It depends on Zn(2+) as a cofactor. Requires Ca(2+) as cofactor. Post-translationally, the precursor is cleaved by a furin endopeptidase. As to expression, strongly expressed in the lung, brain and smooth muscle cells. Weakly detectable in the spleen and liver and indetectable in the heart, skeletal muscle and kidney.

Its subcellular location is the cell membrane. It is found in the secreted. It localises to the extracellular space. The protein localises to the extracellular matrix. Endopeptidase that degrades various components of the extracellular matrix, such as collagen type III and fibronectin. Activates progelatinase A. Involved in the matrix remodeling of blood vessels. The short isoform efficiently converts progelatinase A to the intermediate form but not to the mature one. It has no effect on type I, II, IV and V collagen. However, upon interaction with CSPG4, it may be involved in degradation and invasion of type I collagen by melanoma cells. This Rattus norvegicus (Rat) protein is Matrix metalloproteinase-16 (Mmp16).